A 172-amino-acid polypeptide reads, in one-letter code: Translation initiation factor IF-3 (172 aa).

Belongs to the IF-3 family. Monomer.

The protein resides in the cytoplasm. In terms of biological role, IF-3 binds to the 30S ribosomal subunit and shifts the equilibrium between 70S ribosomes and their 50S and 30S subunits in favor of the free subunits, thus enhancing the availability of 30S subunits on which protein synthesis initiation begins. The chain is Translation initiation factor IF-3 from Campylobacter concisus (strain 13826).